A 536-amino-acid polypeptide reads, in one-letter code: CRISPR-associated DNA-binding protein Cas12m (536 aa).

A recognition domain (REC1-N) region spans residues 1 to 59; the sequence is MPFGKKARHVKAYQFGADAPQEGMEAVLEQHRLRTDYYNALVEMELRQREERTALLANL. The tract at residues 60–105 is recognition domain (REC2); sequence AAESGLESPNQVYERLKAAGEKGIRKHPEYVAARERQKALYGHPRL. The recognition domain (REC1-C) stretch occupies residues 106–159; it reads LELQSRQREERNALRRSFGAKGLYSSNYLDVERAFDKARQSPELRFRRYSPHEG. Residues 160-257 are wedge domain (WED); sequence RLAVLYTEGL…RWTVSVVVEV (98 aa). Positions 258–270 are linker; sequence EGPPVASPTGRGA. Residues 271 to 481 form a ruvC-I region; sequence VAVDLGWRRV…QRGKPVRKLN (211 aa). Residues 482–516 form a target nucleic-acid binding (TNB) region; that stretch reads PAHTTTDCHACGGALVGDPAKELRLYCPTCERFYD. Zn(2+) contacts are provided by C489, C492, C508, and C511. Residues 517–536 are ruvC-II; it reads QDENAARNLLRRAQEVQAQV. Mg(2+) is bound at residue D518.

It belongs to the CRISPR-associated DNA-binding protein Cas12m family. It depends on Mg(2+) as a cofactor. Zn(2+) serves as cofactor.

With respect to regulation, pre-crRNA processing is inhibited by EDTA. Its function is as follows. CRISPR (clustered regularly interspaced short palindromic repeat), is an adaptive immune system that provides protection against mobile genetic elements (viruses, transposable elements and conjugative plasmids). CRISPR clusters contain sequences complementary to antecedent mobile elements and target invading nucleic acids. CRISPR clusters are transcribed and processed into CRISPR RNA (crRNA). Recognizes a short motif in the CRISPR repeat sequences (the 5' PAM or protospacer adjacent motif, 5'-TT/CN-3' in this organism) to help distinguish self versus nonself, as targets within the bacterial CRISPR locus do not have PAMs. Cas12m-crRNA binds DNA in a PAM-dependent, crRNA-guided fashion. DNA-binding probably inhibits transcription, leading to gene silencing. No dsDNA, ssDNA or RNA nuclease activity is seen for the crRNA-Cas12m complex. Upon expression in E.coli as a CRISPR region preferentially binds to its associated crRNA. Is required to process pre-crRNA to mature crRNA without a tracrRNA; processing is Mg(2+)-dependent and does not require the predicted RuvC domain catalytic site. This chain is CRISPR-associated DNA-binding protein Cas12m, found in Allomeiothermus silvanus (strain ATCC 700542 / DSM 9946 / NBRC 106475 / NCIMB 13440 / VI-R2) (Thermus silvanus).